The primary structure comprises 216 residues: Elongation factor Ts (216 aa).

The interval 81-84 is involved in Mg(2+) ion dislocation from EF-Tu; the sequence is TDFV.

This sequence belongs to the EF-Ts family.

The protein resides in the cytoplasm. Its function is as follows. Associates with the EF-Tu.GDP complex and induces the exchange of GDP to GTP. It remains bound to the aminoacyl-tRNA.EF-Tu.GTP complex up to the GTP hydrolysis stage on the ribosome. The chain is Elongation factor Ts from Citrifermentans bemidjiense (strain ATCC BAA-1014 / DSM 16622 / JCM 12645 / Bem) (Geobacter bemidjiensis).